The primary structure comprises 186 residues: Ribosome-recycling factor (186 aa).

The protein belongs to the RRF family.

The protein localises to the cytoplasm. Functionally, responsible for the release of ribosomes from messenger RNA at the termination of protein biosynthesis. May increase the efficiency of translation by recycling ribosomes from one round of translation to another. This Leptothrix cholodnii (strain ATCC 51168 / LMG 8142 / SP-6) (Leptothrix discophora (strain SP-6)) protein is Ribosome-recycling factor.